The primary structure comprises 21 residues: Outer membrane protein A (21 aa).

Residues 6–16 traverse the membrane as a beta stranded segment; that stretch reads TWYTGAKLGWS.

This sequence belongs to the outer membrane OOP (TC 1.B.6) superfamily. OmpA family. In terms of assembly, monomer and homodimer.

The protein resides in the cell outer membrane. Functionally, with TolR probably plays a role in maintaining the position of the peptidoglycan cell wall in the periplasm. Acts as a porin with low permeability that allows slow penetration of small solutes; an internal gate slows down solute passage. The polypeptide is Outer membrane protein A (Actinobacillus lignieresii).